We begin with the raw amino-acid sequence, 398 residues long: Serine/threonine-protein kinase 32A (398 aa).

Glycine 2 carries the N-myristoyl glycine lipid modification. In terms of domain architecture, Protein kinase spans 23–281 (FEILRAIGKG…LTDIQNFPYM (259 aa)). Residues 29–37 (IGKGSFGKV) and lysine 52 each bind ATP. The active-site Proton acceptor is the aspartate 146. Positions 379–398 (ALEQTKNNTEEEEDGQNNNL) are disordered. Over residues 388–398 (EEEEDGQNNNL) the composition is skewed to acidic residues.

The protein belongs to the protein kinase superfamily. Ser/Thr protein kinase family. Mg(2+) is required as a cofactor.

It localises to the cell membrane. It carries out the reaction L-seryl-[protein] + ATP = O-phospho-L-seryl-[protein] + ADP + H(+). The catalysed reaction is L-threonyl-[protein] + ATP = O-phospho-L-threonyl-[protein] + ADP + H(+). This chain is Serine/threonine-protein kinase 32A, found in Mus musculus (Mouse).